The following is a 360-amino-acid chain: Tyrosine-protein phosphatase non-receptor type 7 (360 aa).

Positions 1–37 (MVQAHGGRSRAQPLTLSLGAAMTQPPPEKTPAKKHVR) are disordered. An interaction with MAP kinases region spans residues 38 to 51 (LQERRGSNVALMLD). The residue at position 44 (serine 44) is a Phosphoserine. Threonine 66 is subject to Phosphothreonine. Serine 93, serine 110, and serine 143 each carry phosphoserine. Residues 97–350 (LEEEFLKIPS…QFLHHTLALY (254 aa)) enclose the Tyrosine-protein phosphatase domain. Substrate contacts are provided by residues aspartate 257, 291-297 (CSAGIGR), and glutamine 335. Cysteine 291 (phosphocysteine intermediate) is an active-site residue. A Cysteine sulfenic acid (-SOH) modification is found at cysteine 291.

This sequence belongs to the protein-tyrosine phosphatase family. Non-receptor class subfamily. In terms of assembly, monomer. Interacts with MAPK1, MAPK3 and several other MAP kinases. Phosphorylated on serine residues in resting T-cells. Phosphorylation increases upon exposure to stimuli that increase intracellular cAMP levels. Phosphorylation leads to dissociation of bound MAP kinases. Post-translationally, oxidized at active site cysteine. Treatment with pervanadate (vanadate and H(2)O(2)) or with antigen enhanced oxidation of active site cysteine. Expressed exclusively in thymus and spleen.

It localises to the cytoplasm. The protein resides in the cytoskeleton. It carries out the reaction O-phospho-L-tyrosyl-[protein] + H2O = L-tyrosyl-[protein] + phosphate. Its activity is regulated as follows. Inhibited in cells after FCER1A triggering. Protein phosphatase that acts preferentially on tyrosine-phosphorylated MAPK1. Plays a role in the regulation of T and B-lymphocyte development and signal transduction. The chain is Tyrosine-protein phosphatase non-receptor type 7 (PTPN7) from Homo sapiens (Human).